The following is a 255-amino-acid chain: Na(+)-translocating NADH-quinone reductase subunit C (255 aa).

A helical membrane pass occupies residues leucine 11–glycine 31. Threonine 223 carries the post-translational modification FMN phosphoryl threonine.

The protein belongs to the NqrC family. In terms of assembly, composed of six subunits; NqrA, NqrB, NqrC, NqrD, NqrE and NqrF. FMN is required as a cofactor.

Its subcellular location is the cell inner membrane. It catalyses the reaction a ubiquinone + n Na(+)(in) + NADH + H(+) = a ubiquinol + n Na(+)(out) + NAD(+). Its function is as follows. NQR complex catalyzes the reduction of ubiquinone-1 to ubiquinol by two successive reactions, coupled with the transport of Na(+) ions from the cytoplasm to the periplasm. NqrA to NqrE are probably involved in the second step, the conversion of ubisemiquinone to ubiquinol. The chain is Na(+)-translocating NADH-quinone reductase subunit C from Vibrio vulnificus (strain CMCP6).